The following is a 392-amino-acid chain: Nicotinate phosphoribosyltransferase (392 aa).

H214 bears the Phosphohistidine; by autocatalysis mark.

It belongs to the NAPRTase family. Transiently phosphorylated on a His residue during the reaction cycle. Phosphorylation strongly increases the affinity for substrates and increases the rate of nicotinate D-ribonucleotide production. Dephosphorylation regenerates the low-affinity form of the enzyme, leading to product release.

It catalyses the reaction nicotinate + 5-phospho-alpha-D-ribose 1-diphosphate + ATP + H2O = nicotinate beta-D-ribonucleotide + ADP + phosphate + diphosphate. Its pathway is cofactor biosynthesis; NAD(+) biosynthesis; nicotinate D-ribonucleotide from nicotinate: step 1/1. In terms of biological role, catalyzes the synthesis of beta-nicotinate D-ribonucleotide from nicotinate and 5-phospho-D-ribose 1-phosphate at the expense of ATP. In Xanthomonas axonopodis pv. citri (strain 306), this protein is Nicotinate phosphoribosyltransferase.